Reading from the N-terminus, the 381-residue chain is Protein COS6 (381 aa).

The Cytoplasmic segment spans residues 1–42 (MKENELKNEKSVDVLSVKQLESQKTVLPQDLFRSSFTWFCYE). Residues 43-63 (IYKSLVFRIWMLLWLPLSVWW) form a helical membrane-spanning segment. The Extracellular portion of the chain corresponds to 64–69 (KLSNNW). The helical transmembrane segment at 70-90 (IYPLMVSLLVLFWGPVFVLVI) threads the bilayer. Residues 91 to 381 (FRLSRKRSLS…QLSCSEESLA (291 aa)) lie on the Cytoplasmic side of the membrane.

The protein belongs to the DUP/COS family.

The protein localises to the membrane. The protein is Protein COS6 (COS6) of Saccharomyces cerevisiae (strain ATCC 204508 / S288c) (Baker's yeast).